The primary structure comprises 404 residues: Chorismate synthase (404 aa).

Residues R40 and R46 each coordinate NADP(+). FMN contacts are provided by residues 135-137 (RAS), 256-257 (QA), G300, 315-319 (KPIST), and R341.

The protein belongs to the chorismate synthase family. As to quaternary structure, homotetramer. FMNH2 is required as a cofactor.

The enzyme catalyses 5-O-(1-carboxyvinyl)-3-phosphoshikimate = chorismate + phosphate. The protein operates within metabolic intermediate biosynthesis; chorismate biosynthesis; chorismate from D-erythrose 4-phosphate and phosphoenolpyruvate: step 7/7. In terms of biological role, catalyzes the anti-1,4-elimination of the C-3 phosphate and the C-6 proR hydrogen from 5-enolpyruvylshikimate-3-phosphate (EPSP) to yield chorismate, which is the branch point compound that serves as the starting substrate for the three terminal pathways of aromatic amino acid biosynthesis. This reaction introduces a second double bond into the aromatic ring system. The polypeptide is Chorismate synthase (Mycobacterium sp. (strain JLS)).